We begin with the raw amino-acid sequence, 291 residues long: ATP synthase gamma chain 2 (291 aa).

A disordered region spans residues 187-208; that stretch reads LLPHPDKDESQDSKPNDATSRW. A compositionally biased stretch (basic and acidic residues) spans 190 to 201; that stretch reads HPDKDESQDSKP.

Belongs to the ATPase gamma chain family. F-type ATPases have 2 components, CF(1) - the catalytic core - and CF(0) - the membrane proton channel. CF(1) has five subunits: alpha(3), beta(3), gamma(1), delta(1), epsilon(1). CF(0) has three main subunits: a, b and c.

The protein localises to the cell inner membrane. Functionally, produces ATP from ADP in the presence of a proton gradient across the membrane. The gamma chain is believed to be important in regulating ATPase activity and the flow of protons through the CF(0) complex. The chain is ATP synthase gamma chain 2 from Photobacterium profundum (strain SS9).